The primary structure comprises 434 residues: MGLNITGLIPKHMENRGKLTLKENLKIIENILEQRKAPENGIDEEHIKLLLRLLSFMDTDKDPNVVQIGEREARVYTKLQRDGVFDFCHGVGRSGNLIDPQPKAPGASVMYKLTNKLLESFLKALGLKVNAIATPVATGMSLALCLSAARKKYNSNVVIYPYAAHKSPIKATSFIGMRMRLVETVLDGDIVKVEVSDIEDAIRKEINENNNPVVLSTLTFFPPRKSDDIKEIAKICQDYDIPHIINGAYAIQNFYYIEKLKKALKYRIDAVVSSSDKNLFTPIGGGIIYTKDESFLKEISLTYPGRASANPIVNILISLLAIGTKDYLNLMKEQKECKKLLNELLEDLAKKKGEKVLNVENPISSCITTKKDPLDVAGKLYNLRVTGPRGVRRNDKFGTCYLKEYPYDYIVVNSAIGVKKEDIYKVIEKLDEVL.

Positions 1–40 (MGLNITGLIPKHMENRGKLTLKENLKIIENILEQRKAPEN) are tetramerization. Arg71 serves as a coordination point for pyridoxal 5'-phosphate. The interval 92-102 (GRSGNLIDPQP) is phosphate loop (P-loop). The substrate site is built by Arg93, Ser94, and Gln101. At Lys277 the chain carries N6-(pyridoxal phosphate)lysine. Arg306 serves as a coordination point for substrate.

The protein belongs to the SepSecS family. In terms of assembly, homotetramer. It depends on pyridoxal 5'-phosphate as a cofactor.

It catalyses the reaction O-phospho-L-seryl-tRNA(Sec) + selenophosphate + H2O = L-selenocysteinyl-tRNA(Sec) + 2 phosphate. It participates in aminoacyl-tRNA biosynthesis; selenocysteinyl-tRNA(Sec) biosynthesis; selenocysteinyl-tRNA(Sec) from L-seryl-tRNA(Sec) (archaeal/eukaryal route): step 2/2. Its function is as follows. Converts O-phosphoseryl-tRNA(Sec) to selenocysteinyl-tRNA(Sec) required for selenoprotein biosynthesis. The sequence is that of O-phosphoseryl-tRNA(Sec) selenium transferase (spcS) from Methanocaldococcus jannaschii (strain ATCC 43067 / DSM 2661 / JAL-1 / JCM 10045 / NBRC 100440) (Methanococcus jannaschii).